The following is a 2609-amino-acid chain: MDRKANAYSKSVELLSRLEGCPSEKVLLEELRKLRGFIRNDIPSNFFPQLFITDNGFAAIKKAVTKLNFQSLLSLDIFECCLQILGIATSYTILRSWLLSRKHIEAWIELAIRRMFYSFCAIQDDSNISIYAIGTSSKTDSSIQAASPNEDLKSEGAQEIDSQSETVSISSDVDYDEDRKDLKKAKICSAYYLKTRLLLAVLSFAQNDSTFSLLKLVPSLQDNTNASLVELSRVVEAAIQKLSIKPLAFPNVLPQVLLLCPSISIFNLILLHLRALIRSSPENAIKIGYSKTMHFLLTYLFEPPTSFPLSDVSKDLLNEITLHCATFGVSNASTAKVLRTYLKTKSEFLRTWLLKALSHLVAPSFYFNPSTKGYSSIDFTLSSPVMPINGYSVSLWLNIESLMNDDGNYAPTTLFLISDFLKSTLFRLLLDASKKTVVVHIGSSKDTCVVNFSTPITNFFSKIYKDNPSLNPPSWHLITLVHRNEKSSLPNLELYIDGSAVERAACPYPFLSSTLQPLYVSLGPSIGSRNQSTPSTLAPNVAETDALVSENTGAASQKTSKSYKTNDSLKVPPLVPLLIGTTRFFPVPLVSSQIAIISSLGPSYSGCFQGPINDYMTYKASTALTLEIQDSKSNTEDLLHSIQAFSRSPIAFMSCARDYVDIMDLQLSDFCSFSVLETLKKLENQYYSHVYINRAVSSYDKAFSAEQPSFGVSSGSVTPIIMQSISDAIYNIGGSSILLELVGTAETEAELNFGLQVFFSSIEDNWRFSENVEQTHSFEILAQILHSKSHLLVSEETLKIIALMSGVHHTRFKHPLVMNPLLFRYLILDFDLWSKAPNSNLFVQQLGYIVSLIENNDYAGFNVKRLMKMQILKKLLTAMRNCLFHKDLLPILRLLFKVLMTSAFVSENIRSVATYIIYASQATGKSKPIRRSSVSIAVDRSDSNYISIKESGYAICEEFIDLLIKSNGEPSFLRRFSSMITPAWLLFLLRQQDIHYFICGIRLLNQSICSLGSSFLSKFSQKFHGFLILHDNLKDHIHLEELWLNLLFLSLGLGIRSVQFRTDLTYKQKLDFVLKNELDNILPLSEVFPSLFHAIQATLEKVSNVNGKLNSENVAALRYADDTMSFLVTLQTTYSFELTLNYDFSELLTKVVFPFLSPVDTITAEQEMRDLLHNIRQPLPRSSSSKTFGEGIKKSVRKFSMSGSFKRVVTPLGTQLRKDILNDSITDMENTSSFTASFPQSDQALQYFDNFTVQYAEAKDVIKGLLFSILTCIYNRITSGQGFSYSRLLVYLPPSQIEKKSTFFSGILRSTMSKLIEAVKNDKLLLAEPSILANISYIFTKFIRMHLLGYLKGSWLEIVDDLGSLLEEIISRPDFLAKLPKNGRNAAMNMYSCFLDLFLLEVSDLKQTECNAQSDKIIKSITYWQSLLFNSKTYQKDLFSLLWYAVYIMVETTTGVVRLQAVDAWRLLFLHSPGYLSDIAKTCNNDPRFAYEICKTLDNDSDKFVRWLDDNAAEVNQFMLSCFFCRWEDFLKQQHKLADEEASLLQFSRLEHLRKQLAQNTFNENILNESSASYHVWISSLFALECNRFKKMSQDQSDQENFVAAALLSQKNELSHENSILGSKTTSWELDSTEGSERMRKRLMPCLLQSSELDSKLEARSSGARRNRSFDTSVEAPVSLTNEEKQAATLILPSQEETLHDAARSDSNNSMEDEEDDVDEEDKEDKNRTVMRSIESGDSIQDVYNVSRIFGLEATEGILLLGKQYLYLMDNFFLRSDNEIVDVNDNSIIDERDPYLQLLHLQSLSSSGKVRRHISKENNWHWDFIDLSLVLKRFYLLRDVGLELFFKDGRSFLTILSNTKNRDSLYQKLVARAPGADVLSTSHFATSMSRDLGKANGKSNFLSSKLANALSFSTTHPATKRWERREISNFNYLQIVNTLAGRTYNDLTQYPVFPWVIADYTSKELDLNNPKTYRNFCKPMGAQHPERESQFNERYDLLLGLNDSQQQPFHYGTHYSSAMIVCSYLIRLRPFVDSYLALQGGQFDHADRLFYSIEQAWRSSSKENMADVRELIPEFFYLSEMFINGNGFDFGSRQKESTPINDVILPPWAKGDPAIFVQKNREALESKYVSAHLHEWIDLVFGCKQRGDEAVAATNVFHHLSYQGAIDLENIENEFELAAAVGIIHNFGQTPKQVFKKPHPQRGPDFTDTPLGPYLFGRFEDSIHLLFQSCSPIIRICKKVAHIQYDPSKDEVGAFAADYTPLGPNTFLAWGRVDNTVQLISDQLDKQPVMFEELHSEKITHVVACDERTFLTASLDLTLRLWTLSTNKPIKASLKRVLYGHRYRITCVTVCKAFSIIVSGDAGGNLIIWDLNRAEFVSSLSVYKLPIQTIAVNARNAEIAFSTGFYCCVVNVNGKILVKDKLSRIYNENSDENILCSCFYTGANSEWLHKNLFITGHPDGIIRIWEKRLQSNAKLEAEKNNADRPKWRFHLLRQLQHTKGLGRNRVATRQNIITITPNGQARGIFAGDDKGQVFSWMLPDTTSNVHLEKDNTSELCSLCDSRFSLMEWRSQCRACGNSNVCSDCVSMLKDTNIKTCYECYRQMPLCYKN.

2 disordered regions span residues 1654–1679 (DSKL…APVS) and 1691–1729 (ILPS…KNRT). Over residues 1711–1723 (MEDEEDDVDEEDK) the composition is skewed to acidic residues. Positions 1735–1870 (ESGDSIQDVY…NRDSLYQKLV (136 aa)) constitute a BEACH-type PH domain. Residues 1907–2202 (ANALSFSTTH…QVFKKPHPQR (296 aa)) form the BEACH domain. WD repeat units lie at residues 2249-2290 (KDEV…QPVM), 2294-2332 (LHSE…PIKA), 2340-2379 (GHRY…FVSS), 2429-2475 (NSDE…NAKL), and 2507-2546 (ATRQ…SNVH). The segment at 2550-2604 (DNTSELCSLCDSRFSLMEWRSQCRACGNSNVCSDCVSMLKDTNIKTCYECYRQMP) adopts an FYVE-type zinc-finger fold.

The protein resides in the cytoplasm. The protein localises to the membrane. Functionally, may be involved in protein sorting and cell wall formation. The protein is Beige protein homolog 1 (lvs1) of Schizosaccharomyces pombe (strain 972 / ATCC 24843) (Fission yeast).